Here is a 188-residue protein sequence, read N- to C-terminus: dCTP deaminase (188 aa).

Residues 111 to 116 (KSTYAR), 135 to 137 (VLE), Gln156, Tyr170, and Gln180 contribute to the dCTP site. Glu137 functions as the Proton donor/acceptor in the catalytic mechanism.

Belongs to the dCTP deaminase family. As to quaternary structure, homotrimer.

It catalyses the reaction dCTP + H2O + H(+) = dUTP + NH4(+). It participates in pyrimidine metabolism; dUMP biosynthesis; dUMP from dCTP (dUTP route): step 1/2. Catalyzes the deamination of dCTP to dUTP. The chain is dCTP deaminase from Protochlamydia amoebophila (strain UWE25).